A 258-amino-acid polypeptide reads, in one-letter code: Homeobox-leucine zipper protein ATHB-7 (258 aa).

A DNA-binding region (homeobox) is located at residues asparagine 29–glutamine 88. The tract at residues leucine 89–leucine 124 is leucine-zipper. Positions serine 149–valine 183 are disordered. A compositionally biased stretch (basic and acidic residues) spans threonine 151–valine 183.

The protein belongs to the HD-ZIP homeobox family. Class I subfamily. As to quaternary structure, interacts with TBP2 and TFIIB1. In terms of tissue distribution, widely expressed.

The protein resides in the nucleus. Probable transcription activator that may act as growth regulators in response to water deficit. The sequence is that of Homeobox-leucine zipper protein ATHB-7 (ATHB-7) from Arabidopsis thaliana (Mouse-ear cress).